The following is a 212-amino-acid chain: Probable GTP-binding protein EngB (212 aa).

The region spanning 22-212 is the EngB-type G domain; that stretch reads GVSEFAFFGR…NILSLIAKRI (191 aa). GTP contacts are provided by residues 30–37, 57–61, 95–98, 162–165, and 192–195; these read GRSNAGKS, GMTRE, DLPG, TKAD, and ISSA. Mg(2+) is bound by residues Ser-37 and Thr-59.

It belongs to the TRAFAC class TrmE-Era-EngA-EngB-Septin-like GTPase superfamily. EngB GTPase family. Requires Mg(2+) as cofactor.

In terms of biological role, necessary for normal cell division and for the maintenance of normal septation. The chain is Probable GTP-binding protein EngB from Treponema denticola (strain ATCC 35405 / DSM 14222 / CIP 103919 / JCM 8153 / KCTC 15104).